The chain runs to 454 residues: Transmembrane protease serine 3 (454 aa).

Over 1-48 the chain is Cytoplasmic; it reads MGENDPPAVEAPFSFRSLFGLDDLKISPVAPDADAVAAQILSLLPLKF. A helical; Signal-anchor for type II membrane protein transmembrane segment spans residues 49 to 69; that stretch reads FPIIVIGIIALILALAIGLGI. At 70–454 the chain is on the extracellular side; sequence HFDCSGKYRC…HEQMERDLKT (385 aa). Residues 72–108 enclose the LDL-receptor class A domain; the sequence is DCSGKYRCRSSFKCIELIARCDGVSDCKDGEDEYRCV. 10 cysteine pairs are disulfide-bonded: Cys-73–Cys-85, Cys-79–Cys-98, Cys-92–Cys-107, Cys-129–Cys-194, Cys-142–Cys-204, Cys-207–Cys-324, Cys-242–Cys-258, Cys-338–Cys-407, Cys-370–Cys-386, and Cys-397–Cys-425. Residues 109–205 enclose the SRCR domain; that stretch reads RVGGQNAVLQ…SGHVVTLQCT (97 aa). In terms of domain architecture, Peptidase S1 spans 217 to 449; the sequence is IVGGNMSLLS…FLDWIHEQME (233 aa). The N-linked (GlcNAc...) asparagine glycan is linked to Asn-221. Residues His-257 and Asp-304 each act as charge relay system in the active site. The active-site Charge relay system is Ser-401.

This sequence belongs to the peptidase S1 family. In terms of processing, undergoes autoproteolytic activation. Expressed in many tissues including fetal cochlea. Isoform T is found at increased levels in some carcinomas.

The protein resides in the endoplasmic reticulum membrane. In terms of biological role, probable serine protease that plays a role in hearing. Acts as a permissive factor for cochlear hair cell survival and activation at the onset of hearing and is required for saccular hair cell survival. Activates ENaC (in vitro). The sequence is that of Transmembrane protease serine 3 (TMPRSS3) from Homo sapiens (Human).